Here is a 78-residue protein sequence, read N- to C-terminus: Small ribosomal subunit protein bS16c (78 aa).

The protein belongs to the bacterial ribosomal protein bS16 family.

It is found in the plastid. Its subcellular location is the chloroplast. The protein is Small ribosomal subunit protein bS16c of Adiantum capillus-veneris (Maidenhair fern).